Here is an 841-residue protein sequence, read N- to C-terminus: ATP-dependent helicase Lhr-Core (841 aa).

Residues Gln-39, Lys-62, Thr-63, Asp-181, Glu-182, Ile-352, Arg-369, and His-372 each contribute to the ATP site. Positions 43-234 (IKEIHEGKNV…FLVGNGRDCY (192 aa)) constitute a Helicase ATP-binding domain. Positions 181 to 184 (DEIH) match the DEVH box motif. One can recognise a Helicase C-terminal domain in the interval 266–416 (RLYNLLKKLI…RIHIPKNCLD (151 aa)). Residues 417–500 (VLAQHLVGMA…IYYMNVGTIP (84 aa)) are WH domain. The interval 501–841 (DETAVDVIAD…MEFISMKGKK (341 aa)) is domain 4.

It belongs to the Lhr helicase family. Lhr-Core subfamily. As to quaternary structure, monomer.

It carries out the reaction Couples ATP hydrolysis with the unwinding of duplex DNA by translocating in the 3'-5' direction.. The enzyme catalyses ATP + H2O = ADP + phosphate + H(+). In terms of biological role, DNA helicase that loads on single-stranded (ss)DNA and translocates in a 3'-5' direction, probably involved in DNA repair. Archaeal orthologs have double-stranded (ds)DNA and/or RNA:DNA helicase activity. In Methanocaldococcus jannaschii (strain ATCC 43067 / DSM 2661 / JAL-1 / JCM 10045 / NBRC 100440) (Methanococcus jannaschii), this protein is ATP-dependent helicase Lhr-Core.